Consider the following 195-residue polypeptide: Segregation and condensation protein B (195 aa).

The protein belongs to the ScpB family. As to quaternary structure, homodimer. Homodimerization may be required to stabilize the binding of ScpA to the Smc head domains. Component of a cohesin-like complex composed of ScpA, ScpB and the Smc homodimer, in which ScpA and ScpB bind to the head domain of Smc. The presence of the three proteins is required for the association of the complex with DNA.

It is found in the cytoplasm. In terms of biological role, participates in chromosomal partition during cell division. May act via the formation of a condensin-like complex containing Smc and ScpA that pull DNA away from mid-cell into both cell halves. This chain is Segregation and condensation protein B, found in Clostridium perfringens (strain ATCC 13124 / DSM 756 / JCM 1290 / NCIMB 6125 / NCTC 8237 / Type A).